Consider the following 225-residue polypeptide: Ribonuclease 3 (225 aa).

Residues 5–127 enclose the RNase III domain; sequence MNKLTSKLGY…IIGAIYLDSD (123 aa). Glutamate 40 is a Mg(2+) binding site. Aspartate 44 is a catalytic residue. 2 residues coordinate Mg(2+): aspartate 113 and glutamate 116. Glutamate 116 is a catalytic residue. In terms of domain architecture, DRBM spans 154–224; it reads DPKTRLQEFL…AETALEQLTN (71 aa).

The protein belongs to the ribonuclease III family. As to quaternary structure, homodimer. The cofactor is Mg(2+).

It localises to the cytoplasm. It catalyses the reaction Endonucleolytic cleavage to 5'-phosphomonoester.. Its function is as follows. Digests double-stranded RNA. Involved in the processing of primary rRNA transcript to yield the immediate precursors to the large and small rRNAs (23S and 16S). Processes some mRNAs, and tRNAs when they are encoded in the rRNA operon. Processes pre-crRNA and tracrRNA of type II CRISPR loci if present in the organism. The protein is Ribonuclease 3 of Vibrio cholerae serotype O1 (strain ATCC 39315 / El Tor Inaba N16961).